The sequence spans 429 residues: Adenylosuccinate synthetase (429 aa).

GTP-binding positions include glycine 12–lysine 18 and glycine 40–threonine 42. Aspartate 13 acts as the Proton acceptor in catalysis. The Mg(2+) site is built by aspartate 13 and glycine 40. IMP-binding positions include aspartate 13–lysine 16, asparagine 38–histidine 41, threonine 129, arginine 143, glutamine 223, threonine 238, and arginine 302. The active-site Proton donor is the histidine 41. Threonine 298–arginine 304 provides a ligand contact to substrate. GTP-binding positions include arginine 304, lysine 330 to aspartate 332, and serine 412 to serine 414.

Belongs to the adenylosuccinate synthetase family. As to quaternary structure, homodimer. Mg(2+) serves as cofactor.

It localises to the cytoplasm. It catalyses the reaction IMP + L-aspartate + GTP = N(6)-(1,2-dicarboxyethyl)-AMP + GDP + phosphate + 2 H(+). It participates in purine metabolism; AMP biosynthesis via de novo pathway; AMP from IMP: step 1/2. Plays an important role in the de novo pathway of purine nucleotide biosynthesis. Catalyzes the first committed step in the biosynthesis of AMP from IMP. In Zymomonas mobilis subsp. mobilis (strain ATCC 31821 / ZM4 / CP4), this protein is Adenylosuccinate synthetase.